Here is a 45-residue protein sequence, read N- to C-terminus: Large ribosomal subunit protein bL34 (45 aa).

The segment at Met-1 to Val-45 is disordered. Over residues Ser-10–Gly-39 the composition is skewed to basic residues.

It belongs to the bacterial ribosomal protein bL34 family.

In Prochlorococcus marinus (strain MIT 9301), this protein is Large ribosomal subunit protein bL34.